The sequence spans 239 residues: MRLYPAIDIRNGQCVRLRQGQFHDVEVYSHVPANIAMQWEGQGASYIHIVDLDGALAGHSVNDEVIKEIVQTVSVPIQVGGGIRTIQDIEHKLNLGVNRVIIGTKAVENPQFVKEIISTFGADKIVIGIDAKNGMVAIEGWEKVSNYNAVSLALEMKELGVSTIVYTDISKDGMLQGPNIEHTKEMVDLTGLNIIASGGVSSMKDLEELDKIKVSGVIIGKALYERRIELENATRLFEQ.

Asp-8 functions as the Proton acceptor in the catalytic mechanism. The active-site Proton donor is Asp-130.

This sequence belongs to the HisA/HisF family.

The protein resides in the cytoplasm. It carries out the reaction 1-(5-phospho-beta-D-ribosyl)-5-[(5-phospho-beta-D-ribosylamino)methylideneamino]imidazole-4-carboxamide = 5-[(5-phospho-1-deoxy-D-ribulos-1-ylimino)methylamino]-1-(5-phospho-beta-D-ribosyl)imidazole-4-carboxamide. The protein operates within amino-acid biosynthesis; L-histidine biosynthesis; L-histidine from 5-phospho-alpha-D-ribose 1-diphosphate: step 4/9. The sequence is that of 1-(5-phosphoribosyl)-5-[(5-phosphoribosylamino)methylideneamino] imidazole-4-carboxamide isomerase from Lachnoclostridium phytofermentans (strain ATCC 700394 / DSM 18823 / ISDg) (Clostridium phytofermentans).